The sequence spans 276 residues: CDP-diacylglycerol--serine O-phosphatidyltransferase (276 aa).

The tract at residues 1–21 is disordered; it reads MVESDEDFAPQEFPHTDTDVI. Residues S4, S34, S42, S46, S47, and S50 each carry the phosphoserine modification. 4 helical membrane passes run 82–102, 163–183, 210–230, and 248–268; these read MADY…VSCL, IAFA…FFVL, YFEG…AYCV, and QILE…GMIS.

It belongs to the CDP-alcohol phosphatidyltransferase class-I family. Mn(2+) is required as a cofactor. The cofactor is Mg(2+).

Its subcellular location is the microsome membrane. The protein localises to the endoplasmic reticulum membrane. The protein resides in the mitochondrion outer membrane. It catalyses the reaction a CDP-1,2-diacyl-sn-glycerol + L-serine = a 1,2-diacyl-sn-glycero-3-phospho-L-serine + CMP + H(+). It functions in the pathway phospholipid metabolism; phosphatidylethanolamine biosynthesis; phosphatidylethanolamine from CDP-diacylglycerol: step 1/2. In terms of biological role, catalyzes the synthesis of phosphatidylserine (PtdSer). In Saccharomyces cerevisiae (strain ATCC 204508 / S288c) (Baker's yeast), this protein is CDP-diacylglycerol--serine O-phosphatidyltransferase (CHO1).